Here is a 172-residue protein sequence, read N- to C-terminus: SsrA-binding protein (172 aa).

The protein belongs to the SmpB family.

Its subcellular location is the cytoplasm. Functionally, required for rescue of stalled ribosomes mediated by trans-translation. Binds to transfer-messenger RNA (tmRNA), required for stable association of tmRNA with ribosomes. tmRNA and SmpB together mimic tRNA shape, replacing the anticodon stem-loop with SmpB. tmRNA is encoded by the ssrA gene; the 2 termini fold to resemble tRNA(Ala) and it encodes a 'tag peptide', a short internal open reading frame. During trans-translation Ala-aminoacylated tmRNA acts like a tRNA, entering the A-site of stalled ribosomes, displacing the stalled mRNA. The ribosome then switches to translate the ORF on the tmRNA; the nascent peptide is terminated with the 'tag peptide' encoded by the tmRNA and targeted for degradation. The ribosome is freed to recommence translation, which seems to be the essential function of trans-translation. This chain is SsrA-binding protein, found in Dehalococcoides mccartyi (strain CBDB1).